Reading from the N-terminus, the 303-residue chain is MIIDVNTPISSRLDKYLKRLYPLLTQGVIEKALRQKQITVNAQKAEASLRVKGGDKIFINDKFNLPVKQPEKLVFTDAEIKLAKKITTDYLIYADDNLIAINKPAGLATQGGTKINLSIDSALKYLNYKGADFKLVHRLDKKTSGLLLIAKNYLSSVKLHNAFKEKLVVKTYFAVTYGKPIKNVGEVRSNIEKSKGSTPKITDIDSENGKLAITYYKVLKSLDNNLFLIEFTPVTGRMHQLRLHAKLLGCPILGDDKYGNKEIMPYSKYMFLHANNICLSEKIFGQESKLEAKLPFYFTRRLT.

Residues Ser-11–Pro-70 form the S4 RNA-binding domain. The active site involves Asp-140.

It belongs to the pseudouridine synthase RluA family.

The enzyme catalyses uridine(955/2504/2580) in 23S rRNA = pseudouridine(955/2504/2580) in 23S rRNA. Responsible for synthesis of pseudouridine from uracil at positions 955, 2504 and 2580 in 23S ribosomal RNA. This is Ribosomal large subunit pseudouridine synthase C (rluC) from Rickettsia conorii (strain ATCC VR-613 / Malish 7).